Consider the following 283-residue polypeptide: Polyamine aminopropyltransferase (283 aa).

The region spanning 5–241 is the PABS domain; that stretch reads NNWYIEHFER…GWWSVTMARK (237 aa). S-methyl-5'-thioadenosine is bound at residue Gln-35. 2 residues coordinate spermidine: His-66 and Asp-90. S-methyl-5'-thioadenosine contacts are provided by residues Asp-110 and 141-142; that span reads DG. Asp-160 (proton acceptor) is an active-site residue. 160–163 serves as a coordination point for spermidine; sequence DSTD. Pro-167 serves as a coordination point for S-methyl-5'-thioadenosine.

The protein belongs to the spermidine/spermine synthase family. As to quaternary structure, homodimer or homotetramer.

It is found in the cytoplasm. It carries out the reaction S-adenosyl 3-(methylsulfanyl)propylamine + putrescine = S-methyl-5'-thioadenosine + spermidine + H(+). It participates in amine and polyamine biosynthesis; spermidine biosynthesis; spermidine from putrescine: step 1/1. Functionally, catalyzes the irreversible transfer of a propylamine group from the amino donor S-adenosylmethioninamine (decarboxy-AdoMet) to putrescine (1,4-diaminobutane) to yield spermidine. The sequence is that of Polyamine aminopropyltransferase from Stenotrophomonas maltophilia (strain K279a).